We begin with the raw amino-acid sequence, 148 residues long: uncharacterized protein (148 aa).

The segment at M1 to L108 is disordered. A compositionally biased stretch (basic residues) spans R22–R42. The span at D88–R97 shows a compositional bias: polar residues.

This is an uncharacterized protein from Homo sapiens (Human).